A 149-amino-acid polypeptide reads, in one-letter code: MADQLTEEQIAEFKEAFSLFDKDGDGTITTKELGTVMRSLGQNPTEAELQDMINEVDADGNGTIDFPEFLTMMARKMKDTDSEEEIREAFRVFDKDGNGFISAAELRHVMTNLGEKLTDEEVDEMVREADIDGDGQVNYEEFVEMMTSK.

N-acetylalanine is present on alanine 2. 4 EF-hand domains span residues 8-43, 44-79, 81-116, and 117-149; these read EQIA…LGQN, PTEA…KMKD, DSEE…LGEK, and LTDE…MTSK. Positions 21, 23, 25, 27, 32, 57, 59, 61, 63, 68, 94, 96, 98, and 105 each coordinate Ca(2+). Lysine 116 is subject to N6,N6,N6-trimethyllysine. The Ca(2+) site is built by aspartate 130, aspartate 132, aspartate 134, glutamine 136, and glutamate 141.

This sequence belongs to the calmodulin family.

In terms of biological role, calmodulin mediates the control of a large number of enzymes, ion channels and other proteins by Ca(2+). Among the enzymes to be stimulated by the calmodulin-Ca(2+) complex are a number of protein kinases and phosphatases. This is Calmodulin-2 (CAM2) from Branchiostoma lanceolatum (Common lancelet).